Reading from the N-terminus, the 703-residue chain is Elongation factor G (703 aa).

Residues 9 to 292 (ERTRNIGIMA…AVVDYLPGPL (284 aa)) enclose the tr-type G domain. GTP is bound by residues 18-25 (AHIDAGKT), 91-95 (DTPGH), and 145-148 (NKMD).

Belongs to the TRAFAC class translation factor GTPase superfamily. Classic translation factor GTPase family. EF-G/EF-2 subfamily.

Its subcellular location is the cytoplasm. Its function is as follows. Catalyzes the GTP-dependent ribosomal translocation step during translation elongation. During this step, the ribosome changes from the pre-translocational (PRE) to the post-translocational (POST) state as the newly formed A-site-bound peptidyl-tRNA and P-site-bound deacylated tRNA move to the P and E sites, respectively. Catalyzes the coordinated movement of the two tRNA molecules, the mRNA and conformational changes in the ribosome. The chain is Elongation factor G from Leuconostoc mesenteroides subsp. mesenteroides (strain ATCC 8293 / DSM 20343 / BCRC 11652 / CCM 1803 / JCM 6124 / NCDO 523 / NBRC 100496 / NCIMB 8023 / NCTC 12954 / NRRL B-1118 / 37Y).